A 188-amino-acid chain; its full sequence is Elongation factor P (188 aa).

This sequence belongs to the elongation factor P family.

Its subcellular location is the cytoplasm. It functions in the pathway protein biosynthesis; polypeptide chain elongation. Its function is as follows. Involved in peptide bond synthesis. Stimulates efficient translation and peptide-bond synthesis on native or reconstituted 70S ribosomes in vitro. Probably functions indirectly by altering the affinity of the ribosome for aminoacyl-tRNA, thus increasing their reactivity as acceptors for peptidyl transferase. In Methylorubrum extorquens (strain CM4 / NCIMB 13688) (Methylobacterium extorquens), this protein is Elongation factor P.